We begin with the raw amino-acid sequence, 354 residues long: tRNA-specific 2-thiouridylase MnmA (354 aa).

ATP-binding positions include 6-13 (LLSGGVDS) and Leu33. Cys100 (nucleophile) is an active-site residue. The cysteines at positions 100 and 195 are disulfide-linked. ATP is bound at residue Gly123. Residues 145-147 (KDQ) are interaction with tRNA. Catalysis depends on Cys195, which acts as the Cysteine persulfide intermediate.

Belongs to the MnmA/TRMU family.

Its subcellular location is the cytoplasm. It carries out the reaction S-sulfanyl-L-cysteinyl-[protein] + uridine(34) in tRNA + AH2 + ATP = 2-thiouridine(34) in tRNA + L-cysteinyl-[protein] + A + AMP + diphosphate + H(+). Catalyzes the 2-thiolation of uridine at the wobble position (U34) of tRNA, leading to the formation of s(2)U34. In Borrelia duttonii (strain Ly), this protein is tRNA-specific 2-thiouridylase MnmA.